Consider the following 666-residue polypeptide: tRNA 5-methylaminomethyl-2-thiouridine biosynthesis bifunctional protein MnmC (666 aa).

Positions 1–245 (MKQYAIQPAN…KREMLCGVMA (245 aa)) are tRNA (mnm(5)s(2)U34)-methyltransferase. An FAD-dependent cmnm(5)s(2)U34 oxidoreductase region spans residues 270-666 (IGGGIASALL…RKLLKGKAVK (397 aa)).

It in the N-terminal section; belongs to the methyltransferase superfamily. tRNA (mnm(5)s(2)U34)-methyltransferase family. The protein in the C-terminal section; belongs to the DAO family. Requires FAD as cofactor.

It is found in the cytoplasm. It catalyses the reaction 5-aminomethyl-2-thiouridine(34) in tRNA + S-adenosyl-L-methionine = 5-methylaminomethyl-2-thiouridine(34) in tRNA + S-adenosyl-L-homocysteine + H(+). In terms of biological role, catalyzes the last two steps in the biosynthesis of 5-methylaminomethyl-2-thiouridine (mnm(5)s(2)U) at the wobble position (U34) in tRNA. Catalyzes the FAD-dependent demodification of cmnm(5)s(2)U34 to nm(5)s(2)U34, followed by the transfer of a methyl group from S-adenosyl-L-methionine to nm(5)s(2)U34, to form mnm(5)s(2)U34. The polypeptide is tRNA 5-methylaminomethyl-2-thiouridine biosynthesis bifunctional protein MnmC (Citrobacter koseri (strain ATCC BAA-895 / CDC 4225-83 / SGSC4696)).